The chain runs to 216 residues: Uridine kinase (216 aa).

16–23 contributes to the ATP binding site; it reads GASASGKS.

The protein belongs to the uridine kinase family.

The protein resides in the cytoplasm. The catalysed reaction is uridine + ATP = UMP + ADP + H(+). It carries out the reaction cytidine + ATP = CMP + ADP + H(+). Its pathway is pyrimidine metabolism; CTP biosynthesis via salvage pathway; CTP from cytidine: step 1/3. The protein operates within pyrimidine metabolism; UMP biosynthesis via salvage pathway; UMP from uridine: step 1/1. In Mannheimia succiniciproducens (strain KCTC 0769BP / MBEL55E), this protein is Uridine kinase.